We begin with the raw amino-acid sequence, 180 residues long: Small ribosomal subunit protein uS4 (180 aa).

Positions Arg102 to Glu174 constitute an S4 RNA-binding domain. The tract at residues Val154–Ala180 is disordered. The span at His164–Glu174 shows a compositional bias: basic and acidic residues.

The protein belongs to the universal ribosomal protein uS4 family. Part of the 30S ribosomal subunit. Contacts protein S5. The interaction surface between S4 and S5 is involved in control of translational fidelity.

One of the primary rRNA binding proteins, it binds directly to 16S rRNA where it nucleates assembly of the body of the 30S subunit. Its function is as follows. With S5 and S12 plays an important role in translational accuracy. This Nanoarchaeum equitans (strain Kin4-M) protein is Small ribosomal subunit protein uS4.